An 898-amino-acid polypeptide reads, in one-letter code: Phosphoenolpyruvate carboxylase (898 aa).

Residues histidine 138 and lysine 561 contribute to the active site.

Belongs to the PEPCase type 1 family. Mg(2+) is required as a cofactor.

The enzyme catalyses oxaloacetate + phosphate = phosphoenolpyruvate + hydrogencarbonate. Forms oxaloacetate, a four-carbon dicarboxylic acid source for the tricarboxylic acid cycle. This Streptococcus pneumoniae serotype 4 (strain ATCC BAA-334 / TIGR4) protein is Phosphoenolpyruvate carboxylase.